Reading from the N-terminus, the 331-residue chain is Glyceraldehyde-3-phosphate dehydrogenase (331 aa).

Residues 11–12 (RI), aspartate 33, and arginine 78 contribute to the NAD(+) site. Residues 148-150 (SCT), threonine 179, 208-209 (TG), and arginine 231 contribute to the D-glyceraldehyde 3-phosphate site. Cysteine 149 (nucleophile) is an active-site residue. Asparagine 313 contributes to the NAD(+) binding site.

This sequence belongs to the glyceraldehyde-3-phosphate dehydrogenase family. Homotetramer.

Its subcellular location is the cytoplasm. The catalysed reaction is D-glyceraldehyde 3-phosphate + phosphate + NAD(+) = (2R)-3-phospho-glyceroyl phosphate + NADH + H(+). Its pathway is carbohydrate degradation; glycolysis; pyruvate from D-glyceraldehyde 3-phosphate: step 1/5. The chain is Glyceraldehyde-3-phosphate dehydrogenase (GPD) from Eremothecium gossypii (strain ATCC 10895 / CBS 109.51 / FGSC 9923 / NRRL Y-1056) (Yeast).